A 1177-amino-acid chain; its full sequence is DNA-directed RNA polymerase subunit beta (1177 aa).

Residues 1154-1177 (RDTEDDDDHQSADKLNVEVETTKE) form a disordered region. Over residues 1162 to 1177 (HQSADKLNVEVETTKE) the composition is skewed to basic and acidic residues.

It belongs to the RNA polymerase beta chain family. As to quaternary structure, the RNAP catalytic core consists of 2 alpha, 1 beta, 1 beta' and 1 omega subunit. When a sigma factor is associated with the core the holoenzyme is formed, which can initiate transcription.

The catalysed reaction is RNA(n) + a ribonucleoside 5'-triphosphate = RNA(n+1) + diphosphate. Functionally, DNA-dependent RNA polymerase catalyzes the transcription of DNA into RNA using the four ribonucleoside triphosphates as substrates. The chain is DNA-directed RNA polymerase subunit beta from Bacillus mycoides (strain KBAB4) (Bacillus weihenstephanensis).